The sequence spans 307 residues: Myeloid-associated differentiation marker-like protein 2 (307 aa).

MARVEL domains lie at 17–154 and 159–303; these read AVTS…ARPG and YMAT…RIRF. The next 7 helical transmembrane spans lie at 53-73, 90-110, 129-149, 163-183, 198-218, 232-252, and 278-298; these read FCVAAWGFCFALSVLVVACEF, AFAMLATLLSATAAVIYPLYF, LAASVFAGLLFLAYATEVALT, VSGLLKIVQAFVACIIFGALV, VAVYSLCFLATVVVVILSVLG, VVYTFLAVLLYLSAAVIWPVF, and LVVATFTYVNLLLYVADLAYS.

This sequence belongs to the MAL family.

The protein localises to the membrane. This is Myeloid-associated differentiation marker-like protein 2 (MYADML2) from Bos taurus (Bovine).